A 318-amino-acid polypeptide reads, in one-letter code: Porphobilinogen deaminase (318 aa).

Residue C241 is modified to S-(dipyrrolylmethanemethyl)cysteine.

The protein belongs to the HMBS family. Monomer. Dipyrromethane is required as a cofactor.

It carries out the reaction 4 porphobilinogen + H2O = hydroxymethylbilane + 4 NH4(+). It participates in porphyrin-containing compound metabolism; protoporphyrin-IX biosynthesis; coproporphyrinogen-III from 5-aminolevulinate: step 2/4. Its function is as follows. Tetrapolymerization of the monopyrrole PBG into the hydroxymethylbilane pre-uroporphyrinogen in several discrete steps. The sequence is that of Porphobilinogen deaminase from Geobacter sulfurreducens (strain ATCC 51573 / DSM 12127 / PCA).